Reading from the N-terminus, the 171-residue chain is Adenine phosphoribosyltransferase (171 aa).

The protein belongs to the purine/pyrimidine phosphoribosyltransferase family. As to quaternary structure, homodimer.

It localises to the cytoplasm. It carries out the reaction AMP + diphosphate = 5-phospho-alpha-D-ribose 1-diphosphate + adenine. It participates in purine metabolism; AMP biosynthesis via salvage pathway; AMP from adenine: step 1/1. Its function is as follows. Catalyzes a salvage reaction resulting in the formation of AMP, that is energically less costly than de novo synthesis. The polypeptide is Adenine phosphoribosyltransferase (Prochlorococcus marinus (strain MIT 9515)).